A 1038-amino-acid chain; its full sequence is Zinc finger protein 628 (1038 aa).

The interval 1–31 (MAGSHVDMAPASTTEGTGEKPGPTAPAPTPA) is disordered. Over residues 13–22 (TTEGTGEKPG) the composition is skewed to low complexity. 6 consecutive C2H2-type zinc fingers follow at residues 34-56 (YECG…QRTH), 62-84 (YKCP…QRGH), 90-112 (YQCP…RSVH), 118-140 (FTCG…LRQH), 146-168 (YPCP…RHVH), and 174-196 (YTCG…QRVH). Threonine 197 is modified (phosphothreonine). Residues 202–224 (FRCPLCPKTFTHSSNLLLHHRTH) form a C2H2-type 7 zinc finger. Disordered regions lie at residues 220-242 (HHRT…ETSR) and 254-273 (LQPR…PPVV). Composition is skewed to pro residues over residues 227-237 (APGPAPAPAPP) and 257-273 (RSPP…PPVV). 7 C2H2-type zinc fingers span residues 346 to 368 (FACL…QHSH), 376 to 398 (FRCG…QQCH), 446 to 468 (YKCA…LRDH), 474 to 496 (YQCG…QRVH), 502 to 524 (FTCG…LRLH), 530 to 552 (YACT…RHVH), and 558 to 580 (HSCS…QRVH). The residue at position 581 (threonine 581) is a Phosphothreonine. 2 consecutive C2H2-type zinc fingers follow at residues 586-608 (FRCP…QRTH) and 614-636 (FACP…LRTH). 2 disordered regions span residues 637 to 661 (TPAT…LAAA) and 717 to 763 (PSSV…AGQG). Positions 723–733 (PTPPPPPPPPK) are enriched in pro residues. A compositionally biased stretch (low complexity) spans 734 to 756 (VILLPPASAGGPGSGAARPGPRS). 4 repeat units span residues 811-821 (VQLQPAQEVAT), 822-832 (VQLQPAQEVTT), 833-843 (VQLQPAQEVTT), and 844-854 (VQLQPLTGQVS). Residues 811-854 (VQLQPAQEVATVQLQPAQEVTTVQLQPAQEVTTVQLQPLTGQVS) form a 4 X 11 AA tandem repeats of VQLQP-[AL]-[QT]-[EG]-[VQ]-[ATV]-[ST] region. Residues 922 to 1038 (DGEQTRLCVQ…LPAVQLVHTF (117 aa)) are interaction with TAF4B.

In terms of assembly, interacts with TAF4B. As to expression, expressed widely in testis, in both germline and somatic cells. Seems to have particularly strong expression in meiotic spermatocytes, postmeiotic round spermatids and Sertoli cells. Not detected in elongating spermatids or mature sperm (at protein level). Expressed in testis, ovary, spleen, lung, brain, liver and kidney. Expressed in D3 embryonic stem cells and F9 embryonal carcinoma cells.

Its subcellular location is the nucleus. Its function is as follows. Transcriptional activator. Binds DNA on GT-box consensus sequence 5'-TTGGTT-3'. Plays a role in spermiogenesis. This is Zinc finger protein 628 from Mus musculus (Mouse).